Consider the following 292-residue polypeptide: Coiled-coil domain-containing protein 192 (292 aa).

Residues 28-55 (SVVPESDTSERSSMTSGSSESDIPQENK) are disordered. A compositionally biased stretch (low complexity) spans 38-49 (RSSMTSGSSESD). 2 coiled-coil regions span residues 65-174 (QMAF…LATA) and 222-258 (IMELSTQVSLQTERITQLKEVLEEKERKIQQLEAERS). The segment covering 251-267 (QQLEAERSPHPPQEVKD) has biased composition (basic and acidic residues). Residues 251–292 (QQLEAERSPHPPQEVKDPPGCLPEAPVFSTHDIPPVVSDENL) are disordered.

This chain is Coiled-coil domain-containing protein 192, found in Homo sapiens (Human).